Here is a 96-residue protein sequence, read N- to C-terminus: Colicin-K immunity protein (96 aa).

The helical transmembrane segment at 73–93 (ALFYLLMAIPVGLPSFIYYTL) threads the bilayer.

Its subcellular location is the cell membrane. Its function is as follows. This protein is able to protect a cell, which harbors the plasmid ColK encoding colicin K, against colicin K. The polypeptide is Colicin-K immunity protein (cki) (Escherichia coli).